Consider the following 75-residue polypeptide: DNA-directed RNA polymerase subunit Rpo5 (75 aa).

It belongs to the archaeal Rpo5/eukaryotic RPB5 RNA polymerase subunit family. In terms of assembly, part of the RNA polymerase complex.

Its subcellular location is the cytoplasm. It catalyses the reaction RNA(n) + a ribonucleoside 5'-triphosphate = RNA(n+1) + diphosphate. In terms of biological role, DNA-dependent RNA polymerase (RNAP) catalyzes the transcription of DNA into RNA using the four ribonucleoside triphosphates as substrates. The chain is DNA-directed RNA polymerase subunit Rpo5 from Pyrobaculum aerophilum (strain ATCC 51768 / DSM 7523 / JCM 9630 / CIP 104966 / NBRC 100827 / IM2).